The following is a 177-amino-acid chain: ATP synthase subunit delta (177 aa).

The protein belongs to the ATPase delta chain family. In terms of assembly, F-type ATPases have 2 components, F(1) - the catalytic core - and F(0) - the membrane proton channel. F(1) has five subunits: alpha(3), beta(3), gamma(1), delta(1), epsilon(1). F(0) has three main subunits: a(1), b(2) and c(10-14). The alpha and beta chains form an alternating ring which encloses part of the gamma chain. F(1) is attached to F(0) by a central stalk formed by the gamma and epsilon chains, while a peripheral stalk is formed by the delta and b chains.

It localises to the cell inner membrane. Its function is as follows. F(1)F(0) ATP synthase produces ATP from ADP in the presence of a proton or sodium gradient. F-type ATPases consist of two structural domains, F(1) containing the extramembraneous catalytic core and F(0) containing the membrane proton channel, linked together by a central stalk and a peripheral stalk. During catalysis, ATP synthesis in the catalytic domain of F(1) is coupled via a rotary mechanism of the central stalk subunits to proton translocation. Functionally, this protein is part of the stalk that links CF(0) to CF(1). It either transmits conformational changes from CF(0) to CF(1) or is implicated in proton conduction. In Citrobacter koseri (strain ATCC BAA-895 / CDC 4225-83 / SGSC4696), this protein is ATP synthase subunit delta.